Reading from the N-terminus, the 44-residue chain is Protein PsbN (44 aa).

Residues 6–26 traverse the membrane as a helical segment; the sequence is FFFTFFLWFLLLSATGYSIYV.

Belongs to the PsbN family.

The protein resides in the plastid. It localises to the chloroplast thylakoid membrane. May play a role in photosystem I and II biogenesis. The chain is Protein PsbN from Tetradesmus obliquus (Green alga).